A 135-amino-acid chain; its full sequence is Large ribosomal subunit protein eL32 (135 aa).

Lys-9 is covalently cross-linked (Glycyl lysine isopeptide (Lys-Gly) (interchain with G-Cter in SUMO2)). At Lys-50 the chain carries N6-succinyllysine. Residue Ser-62 is modified to Phosphoserine.

It belongs to the eukaryotic ribosomal protein eL32 family. Component of the large ribosomal subunit.

It is found in the cytoplasm. Component of the large ribosomal subunit. The ribosome is a large ribonucleoprotein complex responsible for the synthesis of proteins in the cell. The protein is Large ribosomal subunit protein eL32 (RPL32) of Macaca fascicularis (Crab-eating macaque).